A 339-amino-acid chain; its full sequence is Serine/threonine-protein kinase pdik1l-A (339 aa).

Residues 8–332 enclose the Protein kinase domain; the sequence is YDLIREVGRG…LELKLIQIAF (325 aa). ATP is bound by residues 14 to 22 and K37; that span reads VGRGSYGVV. Residue D164 is the Proton acceptor of the active site.

It belongs to the protein kinase superfamily. Ser/Thr protein kinase family.

Its subcellular location is the nucleus. It catalyses the reaction L-seryl-[protein] + ATP = O-phospho-L-seryl-[protein] + ADP + H(+). The catalysed reaction is L-threonyl-[protein] + ATP = O-phospho-L-threonyl-[protein] + ADP + H(+). The protein is Serine/threonine-protein kinase pdik1l-A (pdik1-a) of Xenopus laevis (African clawed frog).